Here is a 155-residue protein sequence, read N- to C-terminus: Ribonuclease H (155 aa).

Residues 9–150 enclose the RNase H type-1 domain; sequence DGQQVEMWTD…ADALANQGME (142 aa). 4 residues coordinate Mg(2+): aspartate 18, glutamate 56, aspartate 78, and aspartate 142.

Belongs to the RNase H family. In terms of assembly, monomer. The cofactor is Mg(2+).

Its subcellular location is the cytoplasm. The enzyme catalyses Endonucleolytic cleavage to 5'-phosphomonoester.. Endonuclease that specifically degrades the RNA of RNA-DNA hybrids. This is Ribonuclease H from Bordetella pertussis (strain Tohama I / ATCC BAA-589 / NCTC 13251).